The chain runs to 502 residues: UDP-N-acetylmuramoylalanine--D-glutamate ligase (502 aa).

129–135 (GTNGKTT) provides a ligand contact to ATP.

This sequence belongs to the MurCDEF family.

The protein localises to the cytoplasm. It catalyses the reaction UDP-N-acetyl-alpha-D-muramoyl-L-alanine + D-glutamate + ATP = UDP-N-acetyl-alpha-D-muramoyl-L-alanyl-D-glutamate + ADP + phosphate + H(+). It functions in the pathway cell wall biogenesis; peptidoglycan biosynthesis. Cell wall formation. Catalyzes the addition of glutamate to the nucleotide precursor UDP-N-acetylmuramoyl-L-alanine (UMA). This Burkholderia ambifaria (strain MC40-6) protein is UDP-N-acetylmuramoylalanine--D-glutamate ligase.